A 392-amino-acid chain; its full sequence is [Phe13]-bombesin receptor (392 aa).

Residues 1 to 40 lie on the Extracellular side of the membrane; it reads MPEGFQSLNQTLPSAISSIAHLESLNDSFILGAKQSEDVS. Asparagine 9 and asparagine 26 each carry an N-linked (GlcNAc...) asparagine glycan. The helical transmembrane segment at 41-62 threads the bilayer; it reads PGLEILALISVTYAVIISVGIL. The Cytoplasmic portion of the chain corresponds to 63–81; sequence GNTILIKVFFKIKSMQTVP. A helical membrane pass occupies residues 82–102; it reads NIFITSLAFGDLLLLLTCVPV. The Extracellular segment spans residues 103–120; it reads DASRYIVDTWMFGRAGCK. A disulfide bridge connects residues cysteine 119 and cysteine 202. The helical transmembrane segment at 121 to 142 threads the bilayer; it reads IISFIQLTSVGVSVFTLTVLSA. The Cytoplasmic segment spans residues 143–162; sequence DRYRAIVKPLQLQTSDAVLK. A helical transmembrane segment spans residues 163 to 183; that stretch reads TCGKAVCVWIISMLLAAPEAV. The Extracellular segment spans residues 184-219; that stretch reads FSDLYEFGSSEKNTTFEACAPYPVSEKILQETHSLI. Residues 220 to 240 traverse the membrane as a helical segment; sequence CFLVFYIVPLSIISAYYFLIA. The Cytoplasmic portion of the chain corresponds to 241-271; that stretch reads KTLYKSTFNMPAEEHTHARKQIESRKRVAKT. The chain crosses the membrane as a helical span at residues 272–292; that stretch reads VLVLVALFAVCWLPNHMLYLY. Residues 293–312 are Extracellular-facing; it reads RSFTYHSAVNSSAFHLSATI. The helical transmembrane segment at 313 to 332 threads the bilayer; it reads FARVLAFSNSCVNPFALYWL. The Cytoplasmic portion of the chain corresponds to 333–392; that stretch reads SRSFRQHFKKQVYCCKTEPPASQQSPTHSSTITGITAVKGNIQMSEISITLLSAYDVKKE. The S-palmitoyl cysteine moiety is linked to residue cysteine 346.

Belongs to the G-protein coupled receptor 1 family. As to expression, expressed only in brain, primarily in cortex and forebrain and at low levels in the midbrain.

It is found in the cell membrane. In terms of biological role, the relative rank potency of bombesin-like peptides for this receptor is [Phe13]bombesin &gt; [Leu13]bombesin &gt; GRP &gt; neuromedin-B. The chain is [Phe13]-bombesin receptor (BB4) from Bombina orientalis (Oriental fire-bellied toad).